The following is a 241-amino-acid chain: Fatty acid metabolism regulator protein (241 aa).

Positions K6–F74 constitute an HTH gntR-type domain. The segment at residues E34–Q53 is a DNA-binding region (H-T-H motif).

In terms of assembly, homodimer.

Its subcellular location is the cytoplasm. Functionally, multifunctional regulator of fatty acid metabolism. This is Fatty acid metabolism regulator protein from Shewanella sp. (strain ANA-3).